Consider the following 1070-residue polypeptide: Potassium/chloride cotransporter 3 (1070 aa).

Transmembrane regions (helical) follow at residues 92–112 (GVML…TMFI), 114–134 (LFWV…AICC), 142–162 (ISLS…YFII), 174–194 (VGIL…VGGV), 196–216 (VILM…LHDT), 228–248 (LYGT…VKFV), 251–271 (LAPV…GGGI), 400–420 (FFML…GTNM), 433–453 (VGTI…AILF), 473–493 (TMVV…GAFL), 534–554 (PFLG…LGAV), 557–577 (IAEV…LIAV), 600–620 (LLGA…LACI), 791–811 (LVLF…LIVT), and 827–847 (FIDI…AYLL).

As to expression, expressed in the amphid sheath glia and the cephalic sheath glia. Also expressed in the inner labial and outer labial sheath and socket glia and as well as phasmid sheath glia.

The protein resides in the cell membrane. Its function is as follows. Probable potassium/chloride cotransporter that functions in the amphid sheath glial cells to regulate thermotaxis behavior. By maintaining chloride homeostasis, negatively regulates guanylate cyclase gcy-8 in the thermosensory AFD neurons and thereby controls the microvilli receptive ending morphology of the AFD neurons and thermotaxis. Modulates the temperature-evoked neuronal activity of the AFD neurons such as calcium responses to temperature gradients. Might also play a role in the chemotaxis behavior mediated by the sensory neurons AWA and AWC. The sequence is that of Potassium/chloride cotransporter 3 (kcc-3) from Caenorhabditis elegans.